A 513-amino-acid polypeptide reads, in one-letter code: QWRF motif-containing protein 9 (513 aa).

Composition is skewed to polar residues over residues 1 to 26 (MTAA…PSES), 43 to 55 (GTSS…SPKR), and 65 to 78 (VTPS…PQST). Disordered stretches follow at residues 1-89 (MTAA…RREV), 115-144 (GTLE…LSDQ), and 184-293 (VSNR…LRVR). A compositionally biased stretch (basic and acidic residues) spans 79 to 89 (PRRESLDRREV). 2 stretches are compositionally biased toward polar residues: residues 202–211 (ESVSSGSSNG) and 244–262 (VDSS…SPRG). The short motif at 334 to 337 (QWQF) is the QWRF motif element.

It belongs to the QWRF family.

The sequence is that of QWRF motif-containing protein 9 (QWRF9) from Arabidopsis thaliana (Mouse-ear cress).